Here is a 464-residue protein sequence, read N- to C-terminus: Argininosuccinate lyase (464 aa).

It belongs to the lyase 1 family. Argininosuccinate lyase subfamily.

The protein localises to the cytoplasm. It carries out the reaction 2-(N(omega)-L-arginino)succinate = fumarate + L-arginine. It functions in the pathway amino-acid biosynthesis; L-arginine biosynthesis; L-arginine from L-ornithine and carbamoyl phosphate: step 3/3. In Pseudomonas aeruginosa (strain UCBPP-PA14), this protein is Argininosuccinate lyase.